Here is a 1066-residue protein sequence, read N- to C-terminus: MALDGERGEQEEEKKKKKKKKKRKKKEEEGAEKSSSPFAATMGEDDAALRASGRGLSDPWADSVGVRPRTTERHIAVHKRLVLAFAVSIVALLAVTMLAVLLSLRFDECGASAAMPGTDGGLGGFPERDSNSSFPGSARRNHHAGGESSQRESGEVGTPGTPSAQPPSEEEREQWQPWTQLRLSGHLKPLHYNLMLTAFMENFTFSGEVNVEIACRNATRYVVLHASRVAVEKVQVAEDRAFGAVPVAGFFLYPQTQVLVVVLNRTLDAQRHYNLKIIYNALIENELLGFFRSSYVIHGERRFLGVTQFSPTHARKAFPCFDEPIYKATFKISIKHQATYLSLSNMPVETSVFEEDGWVTDHFSQTPLMSTYYLAWAICNFTYRETTTKSGVVVRLYARPDAIRRGSGDYALHITKRLIEFYEDYFKVPYSLPKLDLLAVPKHPYAAMENWGLSIFVEQRILLDPSVSSISYLLDVTMVIVHEICHQWFGDLVTPVWWEDVWLKEGFAHYFEFVGTDYLYPAWNMEKQRFLTDVLHEVMLLDGLASSHPVSQEVLRATDIDRVFDWIAYKKGAALIRMLANFMGHSVFQRGLQDYLTIHKYGNAARNDLWNTLSEALRRNGKYVNIQEVMDQWTLQMGYPVITILGNTTAENRILITQQHFIYDIGAKTKALQLQNSSYLWQIPLTIVVGNRSHVSSEAIIWVSNKSEHHRIAYLDRGSWILGNINQTGYFRVNYDLRNWRLLIDQLIRNHEVLSVSNRAALIDDAFSLARAGYLPQNIPLEIIRYLSEEKDFLPWHAASRALYPLDKLLDRMENYNIFNEYILKQVATTYIKLGWPRNNFNGSLVQASYQHEELRREVIMLACSFGNKHCHQQASTLISDWISSNRNRIPLNVRDIVYCTGVSLLDEDVWEFIWMKFHSTTAVSEKKILLEALTCSDDRNLLSRLLNLSLNSEVVLDQDAIDVIIHVARNPHGRDLAWKFFRDKWKILNTRYGEALFMNSKLISGVTEFLNTEGELKELKNFMKSYDGVASASFSRAVETVEANVRWKRFYQDELFQWLGKAMRH.

The segment covering 1 to 14 has biased composition (basic and acidic residues); it reads MALDGERGEQEEEK. The interval 1–43 is disordered; it reads MALDGERGEQEEEKKKKKKKKKRKKKEEEGAEKSSSPFAATMG. Over 1–81 the chain is Cytoplasmic; the sequence is MALDGERGEQ…ERHIAVHKRL (81 aa). Positions 15-25 are enriched in basic residues; that stretch reads KKKKKKKKRKK. Thr-71 bears the Phosphothreonine; by PKC mark. Residues 82 to 102 form a helical; Signal-anchor for type II membrane protein membrane-spanning segment; it reads VLAFAVSIVALLAVTMLAVLL. Residues 103–1066 are Extracellular-facing; it reads SLRFDECGAS…FQWLGKAMRH (964 aa). The disordered stretch occupies residues 118-176; the sequence is TDGGLGGFPERDSNSSFPGSARRNHHAGGESSQRESGEVGTPGTPSAQPPSEEEREQWQ. Asn-131, Asn-202, Asn-217, Asn-264, and Asn-380 each carry an N-linked (GlcNAc...) asparagine glycan. 446–450 contributes to the substrate binding site; it reads AAMEN. His-482 contributes to the Zn(2+) binding site. Glu-483 (proton acceptor) is an active-site residue. Zn(2+) is bound by residues His-486 and Glu-505. N-linked (GlcNAc...) asparagine glycans are attached at residues Asn-647, Asn-676, Asn-691, Asn-705, Asn-726, Asn-842, and Asn-948.

It belongs to the peptidase M1 family. In terms of assembly, homodimer; disulfide-linked. Requires Zn(2+) as cofactor.

The protein localises to the membrane. The catalysed reaction is Release of the N-terminal pyroglutamyl group from pGlu-|-His-Xaa tripeptides and pGlu-|-His-Xaa-Gly tetrapeptides.. Specific inactivation of TRH after its release. The protein is Thyrotropin-releasing hormone-degrading ectoenzyme (Trhde) of Mus musculus (Mouse).